Reading from the N-terminus, the 155-residue chain is Large ribosomal subunit protein uL22c (155 aa).

Belongs to the universal ribosomal protein uL22 family. Part of the 50S ribosomal subunit.

The protein localises to the plastid. It is found in the chloroplast. In terms of biological role, this protein binds specifically to 23S rRNA. Functionally, the globular domain of the protein is located near the polypeptide exit tunnel on the outside of the subunit, while an extended beta-hairpin is found that lines the wall of the exit tunnel in the center of the 70S ribosome. This Nicotiana sylvestris (Wood tobacco) protein is Large ribosomal subunit protein uL22c (rpl22).